The chain runs to 137 residues: Peptide methionine sulfoxide reductase MsrB (137 aa).

Residues 7–129 (PDHPATELNE…NSASLSFTDG (123 aa)) form the MsrB domain. The Zn(2+) site is built by C46, C49, C95, and C98. The active-site Nucleophile is the C118.

This sequence belongs to the MsrB Met sulfoxide reductase family. The cofactor is Zn(2+).

It catalyses the reaction L-methionyl-[protein] + [thioredoxin]-disulfide + H2O = L-methionyl-(R)-S-oxide-[protein] + [thioredoxin]-dithiol. This is Peptide methionine sulfoxide reductase MsrB from Serratia proteamaculans (strain 568).